Consider the following 219-residue polypeptide: Probable nicotinate-nucleotide adenylyltransferase (219 aa).

This sequence belongs to the NadD family.

It carries out the reaction nicotinate beta-D-ribonucleotide + ATP + H(+) = deamido-NAD(+) + diphosphate. It participates in cofactor biosynthesis; NAD(+) biosynthesis; deamido-NAD(+) from nicotinate D-ribonucleotide: step 1/1. Functionally, catalyzes the reversible adenylation of nicotinate mononucleotide (NaMN) to nicotinic acid adenine dinucleotide (NaAD). This is Probable nicotinate-nucleotide adenylyltransferase from Herminiimonas arsenicoxydans.